The following is a 252-amino-acid chain: Ubiquinone biosynthesis O-methyltransferase (252 aa).

Residues R51, G70, D91, and M136 each contribute to the S-adenosyl-L-methionine site.

The protein belongs to the methyltransferase superfamily. UbiG/COQ3 family.

It catalyses the reaction a 3-demethylubiquinol + S-adenosyl-L-methionine = a ubiquinol + S-adenosyl-L-homocysteine + H(+). It carries out the reaction a 3-(all-trans-polyprenyl)benzene-1,2-diol + S-adenosyl-L-methionine = a 2-methoxy-6-(all-trans-polyprenyl)phenol + S-adenosyl-L-homocysteine + H(+). It participates in cofactor biosynthesis; ubiquinone biosynthesis. Its function is as follows. O-methyltransferase that catalyzes the 2 O-methylation steps in the ubiquinone biosynthetic pathway. The protein is Ubiquinone biosynthesis O-methyltransferase of Albidiferax ferrireducens (strain ATCC BAA-621 / DSM 15236 / T118) (Rhodoferax ferrireducens).